We begin with the raw amino-acid sequence, 58 residues long: MAVPARHTSSAKKNRRRTHYKLTAPTVTFDETTGDYRHSHRVSLKGYYKGRKVRDDTK.

The segment at 1-23 (MAVPARHTSSAKKNRRRTHYKLT) is disordered. The span at 9–20 (SSAKKNRRRTHY) shows a compositional bias: basic residues.

This sequence belongs to the bacterial ribosomal protein bL32 family.

The polypeptide is Large ribosomal subunit protein bL32 (rpmF) (Lactococcus lactis subsp. cremoris (Streptococcus cremoris)).